Consider the following 151-residue polypeptide: Ribosome maturation factor RimP (151 aa).

Belongs to the RimP family.

It is found in the cytoplasm. Its function is as follows. Required for maturation of 30S ribosomal subunits. The sequence is that of Ribosome maturation factor RimP from Aliivibrio salmonicida (strain LFI1238) (Vibrio salmonicida (strain LFI1238)).